Here is a 150-residue protein sequence, read N- to C-terminus: Lymphotoxin-beta (150 aa).

A THD domain is found at 1 to 149 (AWITGQGLGW…GKTFFGAVMV (149 aa)). An N-linked (GlcNAc...) asparagine glycan is attached at Asn128.

This sequence belongs to the tumor necrosis factor family. As to quaternary structure, heterotrimer of either two LTB and one LTA subunits or (less prevalent) two LTA and one LTB subunits.

It localises to the membrane. Functionally, cytokine that binds to LTBR/TNFRSF3. May play a specific role in immune response regulation. Provides the membrane anchor for the attachment of the heterotrimeric complex to the cell surface. The sequence is that of Lymphotoxin-beta (LTB) from Sus scrofa (Pig).